The sequence spans 207 residues: Ras-related protein Rab7 (207 aa).

Residues 15–22, 34–40, 63–67, 125–128, and 156–157 each bind GTP; these read GDSSVGKT, SNQYKAT, DTAGQ, NKVD, and AK. The short motif at 37 to 45 is the Effector region element; that stretch reads YKATIGADF. 2 S-geranylgeranyl cysteine lipidation sites follow: cysteine 205 and cysteine 207.

The protein belongs to the small GTPase superfamily. Rab family. Expressed in eye (at protein level).

It localises to the early endosome membrane. It is found in the late endosome membrane. The protein localises to the lysosome membrane. The protein resides in the cytoplasmic vesicle. Its subcellular location is the autophagosome membrane. It localises to the autolysosome membrane. It is found in the presynapse. The protein localises to the perikaryon. It carries out the reaction GTP + H2O = GDP + phosphate + H(+). Its function is as follows. Small GTPase which cycles between active GTP-bound and inactive GDP-bound states. In its active state, binds to a variety of effector proteins playing a key role in the regulation of endo-lysosomal trafficking. Involved in microtubule minus and plus end-directed endosomal migration and positioning, and endosome-lysosome transport through different protein-protein interaction cascades. Governs early-to-late endosomal to lysosomal maturation. Controls endocytic cargo sorting towards the late endosome facilitating its eventual endolysosomal-mediated degradation. Together with Rab2 involved in promoting fusion of autophagosomes and endosomes with lysosomes probably through recruitment of the HOPS tethering complex. Involved in biosynthetic transport to lysosomes. Involved in establishing morphogen concentration gradients, for example of the TGF-beta homolog dpp/decapentaplegic, during pattern formation and organogenesis. Together with the Mon1-Ccz1 complex, required for autolysosome formation in fat cells and autophagic degradation during starvation-induced basal and developmental autophagy. Together with Mon1, regulates levels of postsynaptic glutamate receptor GluRIIA in the neuromuscular junction (NMJ) presynapse. Required for autophagocytosis-dependent remodeling of myofibrils and transverse-tubules (T-tubules) during metamorphosis. Involved in intracellular trafficking of the carbohydrate transporter Tret1 in glial cells of the blood brain barrier, influencing its subcellular localization and protein levels. The polypeptide is Ras-related protein Rab7 (Drosophila melanogaster (Fruit fly)).